The sequence spans 237 residues: N-demethylindolmycin N-methyltransferase (237 aa).

Belongs to the methyltransferase superfamily.

The catalysed reaction is N-demethylindolmycin + S-adenosyl-L-methionine = indolmycin + S-adenosyl-L-homocysteine + H(+). In terms of biological role, involved in the biosynthesis of the antibiotic indolmycin, an inhibitor of the bacterial tryptophan-tRNA synthetases. Catalyzes the methylation of N-demethylindolmycin to yield indolmycin, with S-adenosylmethionine (AdoMet) acting as the methyl donor. This chain is N-demethylindolmycin N-methyltransferase, found in Streptomyces griseus.